Reading from the N-terminus, the 96-residue chain is Protein Vpr (96 aa).

Positions 1-42 are homooligomerization; it reads MEQPPEDQGPQREPYNEWTLELLEELKNEAVRHFPREYLHGL. Ser79, Ser94, and Ser96 each carry phosphoserine; by host.

This sequence belongs to the HIV-1 VPR protein family. In terms of assembly, homooligomer, may form homodimer. Interacts with p6-gag region of the Pr55 Gag precursor protein through a (Leu-X-X)4 motif near the C-terminus of the P6gag protein. Interacts with host UNG. May interact with host RAD23A/HHR23A. Interacts with host VPRBP/DCAF1, leading to hijack the CUL4A-RBX1-DDB1-DCAF1/VPRBP complex, mediating ubiquitination of host proteins such as TERT and ZGPAT and arrest of the cell cycle in G2 phase. In terms of processing, phosphorylated on several residues by host. These phosphorylations regulate VPR activity for the nuclear import of the HIV-1 pre-integration complex.

The protein localises to the virion. It is found in the host nucleus. It localises to the host extracellular space. During virus replication, may deplete host UNG protein, and incude G2-M cell cycle arrest. Acts by targeting specific host proteins for degradation by the 26S proteasome, through association with the cellular CUL4A-DDB1 E3 ligase complex by direct interaction with host VPRPB/DCAF-1. Cell cycle arrest reportedly occurs within hours of infection and is not blocked by antiviral agents, suggesting that it is initiated by the VPR carried into the virion. Additionally, VPR induces apoptosis in a cell cycle dependent manner suggesting that these two effects are mechanistically linked. Detected in the serum and cerebrospinal fluid of AIDS patient, VPR may also induce cell death to bystander cells. Functionally, during virus entry, plays a role in the transport of the viral pre-integration (PIC) complex to the host nucleus. This function is crucial for viral infection of non-dividing macrophages. May act directly at the nuclear pore complex, by binding nucleoporins phenylalanine-glycine (FG)-repeat regions. The protein is Protein Vpr of Homo sapiens (Human).